The sequence spans 393 residues: Riboflavin biosynthesis protein RibBA (393 aa).

Positions 1-200 (MQFDNIDSAL…IDDLIEYRKK (200 aa)) are DHBP synthase. D-ribulose 5-phosphate contacts are provided by residues 27–28 (RE), Asp32, 139–143 (RNGHT), and Glu163. Glu28 contacts Mg(2+). A Mg(2+)-binding site is contributed by His142. Positions 201–393 (LEPEIEFKAK…TKKIKMGHLI (193 aa)) are GTP cyclohydrolase II. Position 249–253 (249–253 (RLHSA)) interacts with GTP. Cys254, Cys265, and Cys267 together coordinate Zn(2+). GTP contacts are provided by residues Gln270, 291–293 (EGR), and Thr313. The Proton acceptor; for GTP cyclohydrolase activity role is filled by Asp325. The Nucleophile; for GTP cyclohydrolase activity role is filled by Arg327. Residues Ser348 and Lys353 each coordinate GTP.

This sequence in the N-terminal section; belongs to the DHBP synthase family. It in the C-terminal section; belongs to the GTP cyclohydrolase II family. Mg(2+) serves as cofactor. Requires Mn(2+) as cofactor. Zn(2+) is required as a cofactor.

The enzyme catalyses D-ribulose 5-phosphate = (2S)-2-hydroxy-3-oxobutyl phosphate + formate + H(+). The catalysed reaction is GTP + 4 H2O = 2,5-diamino-6-hydroxy-4-(5-phosphoribosylamino)-pyrimidine + formate + 2 phosphate + 3 H(+). The protein operates within cofactor biosynthesis; riboflavin biosynthesis; 2-hydroxy-3-oxobutyl phosphate from D-ribulose 5-phosphate: step 1/1. Its pathway is cofactor biosynthesis; riboflavin biosynthesis; 5-amino-6-(D-ribitylamino)uracil from GTP: step 1/4. Its function is as follows. Catalyzes the conversion of D-ribulose 5-phosphate to formate and 3,4-dihydroxy-2-butanone 4-phosphate. Catalyzes the conversion of GTP to 2,5-diamino-6-ribosylamino-4(3H)-pyrimidinone 5'-phosphate (DARP), formate and pyrophosphate. In Staphylococcus aureus (strain Mu50 / ATCC 700699), this protein is Riboflavin biosynthesis protein RibBA.